Consider the following 179-residue polypeptide: Large ribosomal subunit protein uL5 (179 aa).

The protein belongs to the universal ribosomal protein uL5 family. In terms of assembly, part of the 50S ribosomal subunit; part of the 5S rRNA/L5/L18/L25 subcomplex. Contacts the 5S rRNA and the P site tRNA. Forms a bridge to the 30S subunit in the 70S ribosome.

Its function is as follows. This is one of the proteins that bind and probably mediate the attachment of the 5S RNA into the large ribosomal subunit, where it forms part of the central protuberance. In the 70S ribosome it contacts protein S13 of the 30S subunit (bridge B1b), connecting the 2 subunits; this bridge is implicated in subunit movement. Contacts the P site tRNA; the 5S rRNA and some of its associated proteins might help stabilize positioning of ribosome-bound tRNAs. The protein is Large ribosomal subunit protein uL5 of Hamiltonella defensa subsp. Acyrthosiphon pisum (strain 5AT).